A 355-amino-acid chain; its full sequence is Uroporphyrinogen decarboxylase (355 aa).

Substrate is bound by residues 23 to 27, aspartate 72, tyrosine 148, serine 203, and histidine 321; that span reads RQAGR.

The protein belongs to the uroporphyrinogen decarboxylase family. In terms of assembly, homodimer.

It localises to the cytoplasm. It carries out the reaction uroporphyrinogen III + 4 H(+) = coproporphyrinogen III + 4 CO2. Its pathway is porphyrin-containing compound metabolism; protoporphyrin-IX biosynthesis; coproporphyrinogen-III from 5-aminolevulinate: step 4/4. In terms of biological role, catalyzes the decarboxylation of four acetate groups of uroporphyrinogen-III to yield coproporphyrinogen-III. The chain is Uroporphyrinogen decarboxylase from Chloroflexus aurantiacus (strain ATCC 29366 / DSM 635 / J-10-fl).